The primary structure comprises 559 residues: MRYKSMGDSLSIRNEKAFEAALQALRRHAIKDGVYDIRRHFIEDEQRFSNFSLNLDDFLFDFSKCGVTFKTLQLLDDLAVAADVLGRRDAMFSGKAINTTEKRSVLHIALRLPADEVFMLDGTDLVHDIQGVLADMERFSDMVRDGSYKGNSGEKIIDIVNIGIGGSDLGPAMVTYALKPYHDGPNCHFVSNADSAHISDTLSVLNPATTLFVIASKTFTTAETIANAQVARQWIMSHLGKEAVCKHFIAVSSALDKVAEFGIDSSRTFRFWDWVGGRYSIWSAIGLVVMLAIGGQNFRQFLEGAQHMDRHFKTAPLRKNIPIRFALLGFWHRVVCGYASRAVIPYAQRLARFPAYLQQLDMESNGKQVSLDGKTLTFSSGPVVWGDSGTNGQHAFFQLLHQGTDVIPVEFILFIKGHEQNLHPMYDMLVANCLAQSKALMKGRSVEDARRMLLKSGIDERESENLALHKSFAGNRPNMMLVQDLLTPFALGRLIALYEHRIFVEGILMNINSFDQWGVELGKELANELLPILRGENKTNNRDSSTLGLLAHIQARRGE.

Glutamate 363 (proton donor) is an active-site residue. Residues histidine 394 and lysine 523 contribute to the active site.

Belongs to the GPI family.

The protein localises to the cytoplasm. It carries out the reaction alpha-D-glucose 6-phosphate = beta-D-fructose 6-phosphate. Its pathway is carbohydrate biosynthesis; gluconeogenesis. It functions in the pathway carbohydrate degradation; glycolysis; D-glyceraldehyde 3-phosphate and glycerone phosphate from D-glucose: step 2/4. Catalyzes the reversible isomerization of glucose-6-phosphate to fructose-6-phosphate. The sequence is that of Glucose-6-phosphate isomerase from Bartonella henselae (strain ATCC 49882 / DSM 28221 / CCUG 30454 / Houston 1) (Rochalimaea henselae).